Reading from the N-terminus, the 255-residue chain is H-2 class II histocompatibility antigen, E-D alpha chain (255 aa).

The signal sequence occupies residues 1-25; that stretch reads MATIGALVLRFFFIAVLMSSQKSWA. The alpha-1 stretch occupies residues 26–109; sequence IKEEHTIIQA…ERSNNTPDAN (84 aa). At 26-216 the chain is on the extracellular side; sequence IKEEHTIIQA…EKTLLPETKE (191 aa). Residues 110 to 203 are alpha-2; it reads VAPEVTVLSR…GLEEPLRKTW (94 aa). Residues 112–204 enclose the Ig-like C1-type domain; that stretch reads PEVTVLSRSP…LEEPLRKTWE (93 aa). An intrachain disulfide couples Cys132 to Cys188. Asn143 is a glycosylation site (N-linked (GlcNAc...) asparagine). The interval 204 to 216 is connecting peptide; that stretch reads EFEEKTLLPETKE. A helical membrane pass occupies residues 217-242; that stretch reads NVMCALGLFVGLVGIVVGIILIMKGI. Over 243-255 the chain is Cytoplasmic; sequence KKRNVVERRQGAL.

Belongs to the MHC class II family.

The protein resides in the membrane. The chain is H-2 class II histocompatibility antigen, E-D alpha chain (H2-Ea) from Mus musculus (Mouse).